The following is a 360-amino-acid chain: Capsular polysaccharide phosphotransferase LcbA (360 aa).

The protein belongs to the stealth family.

Functionally, part of a group II capsule biosynthesis locus. This is Capsular polysaccharide phosphotransferase LcbA (lcbA) from Aeromonas hydrophila.